The primary structure comprises 111 residues: Ig kappa chain V-III region PC 2413 (111 aa).

Positions 1-23 (DIVLTQSPASLAVSLGQRATISC) are framework-1. A disulfide bond links Cys-23 and Cys-92. The tract at residues 24-38 (RASESVVNYGVSLMH) is complementarity-determining-1. The interval 39–53 (WFQQKPGQPPKLLIY) is framework-2. The complementarity-determining-2 stretch occupies residues 54–60 (GASNRGS). The framework-3 stretch occupies residues 61–92 (GVPARFSGSGSGTDFSLIIHPMEEDDSAMYFC). The segment at 93-101 (HQTKEVPWT) is complementarity-determining-3. The segment at 102–111 (FGGGTDLEIE) is framework-4.

The protein is Ig kappa chain V-III region PC 2413 of Mus musculus (Mouse).